We begin with the raw amino-acid sequence, 471 residues long: Protoporphyrinogen oxidase (471 aa).

FAD-binding positions include 16–21 (GGGISG), 39–40 (ES), Ala-47, 61–64 (GPNS), Val-251, Trp-408, and 446–448 (VGL).

This sequence belongs to the protoporphyrinogen/coproporphyrinogen oxidase family. Protoporphyrinogen oxidase subfamily. As to quaternary structure, monomer. Homodimer. Requires FAD as cofactor.

It localises to the cytoplasm. The protein resides in the cell membrane. The catalysed reaction is protoporphyrinogen IX + 3 O2 = protoporphyrin IX + 3 H2O2. Its pathway is porphyrin-containing compound metabolism; protoporphyrin-IX biosynthesis; protoporphyrin-IX from protoporphyrinogen-IX: step 1/1. Its activity is regulated as follows. Strongly inhibited by acifluorfen. In terms of biological role, catalyzes the 6-electron oxidation of protoporphyrinogen-IX to form protoporphyrin-IX. Does not oxidize coproporphyrinogen III. Involved in the classical protoporphyrin-dependent (PPD) heme b biosynthesis. This is Protoporphyrinogen oxidase from Myxococcus xanthus.